A 510-amino-acid polypeptide reads, in one-letter code: E3 ubiquitin-protein ligase TRIM7 (510 aa).

The RING-type zinc-finger motif lies at 29–81 (CSICLEFFREPVSVECGHSFCRACIMRCWERPGAGTGTATRTLPCPLPCPQCR). S106 carries the post-translational modification Phosphoserine; by RPS6KA5. The B box-type zinc-finger motif lies at 124-165 (AAAARCSQHGEQLKLYCQDDGRAICVVCDRAREHRSHAVLPL). Zn(2+)-binding residues include C129, H132, C151, and H157. The stretch at 165–275 (LEEAVQEAKE…SGQIQETAQK (111 aa)) forms a coiled coil. A B30.2/SPRY domain is found at 323–510 (LLKKFKEDLQ…STGTYLRIWP (188 aa)).

This sequence belongs to the TRIM/RBCC family. In terms of assembly, forms homodimers. Interacts with GNIP2. Interacts with GYG1. Interacts with RNF187 (via C-terminus). Phosphorylated at Ser-106 by RPS6KA5/MSK1, which stimulates the ubiquitin ligase activity. Post-translationally, auto-ubiquitinates via 'Lys-63'-linked polyubiquitination. Highly expressed in antigen-presenting cells.

It is found in the nucleus. The protein localises to the cytoplasm. Its subcellular location is the golgi apparatus. It carries out the reaction S-ubiquitinyl-[E2 ubiquitin-conjugating enzyme]-L-cysteine + [acceptor protein]-L-lysine = [E2 ubiquitin-conjugating enzyme]-L-cysteine + N(6)-ubiquitinyl-[acceptor protein]-L-lysine.. It functions in the pathway protein modification; protein ubiquitination. Functionally, E3 ubiquitin-protein ligase that have both tumor-promoting and tumor-suppressing activities and functions in several biological processes including innate immunity, regulation of ferroptosis as well as cell proliferation and migration. Acts as an antiviral effector against multiple viruses by targeting specific viral proteins for ubiquitination and degradation including norovirus NTPase protein. Mechanistically, recognizes the C-terminal glutamine-containing motif generated by viral proteases that process the polyproteins and trigger their ubiquitination and subsequent degradation. Mediates 'Lys-63'-linked polyubiquitination and stabilization of the JUN coactivator RNF187 in response to growth factor signaling via the MEK/ERK pathway, thereby regulating JUN transactivation and cellular proliferation. Promotes the TLR4-mediated signaling activation through its E3 ligase domain leading to production of pro-inflammatory cytokines and type I interferon. Also plays a negative role in the regulation of exogenous cytosolic DNA virus-triggered immune response. Mechanistically, enhances the 'Lys-48'-linked ubiquitination of STING1 leading to its proteasome-dependent degradation. Mediates the ubiquitination of the SIN3-HDAC chromatin remodeling complex component BRMS1. Modulates NCOA4-mediated ferritinophagy and ferroptosis in glioblastoma cells by ubiquitinating NCOA4, leading to its degradation. The chain is E3 ubiquitin-protein ligase TRIM7 (Trim7) from Mus musculus (Mouse).